Here is a 120-residue protein sequence, read N- to C-terminus: Large ribosomal subunit protein uL18 (120 aa).

The disordered stretch occupies residues 1–24 (MITKAAKNATRKKRHARVRAKLTG). Residues 9 to 20 (ATRKKRHARVRA) show a composition bias toward basic residues.

It belongs to the universal ribosomal protein uL18 family. Part of the 50S ribosomal subunit; part of the 5S rRNA/L5/L18/L25 subcomplex. Contacts the 5S and 23S rRNAs.

This is one of the proteins that bind and probably mediate the attachment of the 5S RNA into the large ribosomal subunit, where it forms part of the central protuberance. The polypeptide is Large ribosomal subunit protein uL18 (Bacillus mycoides (strain KBAB4) (Bacillus weihenstephanensis)).